A 154-amino-acid polypeptide reads, in one-letter code: Nuclear cap-binding protein subunit 2 (154 aa).

MRNA-binding positions include tyrosine 10, tyrosine 33, arginine 102–aspartate 106, arginine 113–arginine 117, and glutamine 123–valine 124. The region spanning cysteine 30–glycine 108 is the RRM domain.

This sequence belongs to the RRM NCBP2 family. In terms of assembly, component of the nuclear cap-binding complex (CBC), a heterodimer composed of Cbp80 and Cbp20 that interacts with m7GpppG-capped RNA. Interacts with Ars2.

The protein resides in the nucleus. Component of the cap-binding complex (CBC), which binds co-transcriptionally to the 5' cap of pre-mRNAs and is involved in various processes such as pre-mRNA splicing and RNA-mediated gene silencing (RNAi). The CBC complex is involved in miRNA-mediated RNA interference via its interaction with Ars2 and is required for primary microRNAs (miRNAs) processing. Also involved in innate immunity via the short interfering RNAs (siRNAs) processing machinery by restricting the viral RNA production. In the CBC complex, Cbp20 recognizes and binds capped RNAs (m7GpppG-capped RNA) but requires Cbp80 to stabilize the movement of its N-terminal loop and lock the CBC into a high affinity cap-binding state with the cap structure. The protein is Nuclear cap-binding protein subunit 2 (Cbp20) of Drosophila melanogaster (Fruit fly).